The chain runs to 263 residues: Acyl-[acyl-carrier-protein]--UDP-N-acetylglucosamine O-acyltransferase (263 aa).

This sequence belongs to the transferase hexapeptide repeat family. LpxA subfamily. Homotrimer.

Its subcellular location is the cytoplasm. It carries out the reaction a (3R)-hydroxyacyl-[ACP] + UDP-N-acetyl-alpha-D-glucosamine = a UDP-3-O-[(3R)-3-hydroxyacyl]-N-acetyl-alpha-D-glucosamine + holo-[ACP]. Its pathway is glycolipid biosynthesis; lipid IV(A) biosynthesis; lipid IV(A) from (3R)-3-hydroxytetradecanoyl-[acyl-carrier-protein] and UDP-N-acetyl-alpha-D-glucosamine: step 1/6. Functionally, involved in the biosynthesis of lipid A, a phosphorylated glycolipid that anchors the lipopolysaccharide to the outer membrane of the cell. The chain is Acyl-[acyl-carrier-protein]--UDP-N-acetylglucosamine O-acyltransferase from Campylobacter jejuni subsp. jejuni serotype O:6 (strain 81116 / NCTC 11828).